The sequence spans 134 residues: Putative capsid protein (134 aa).

In terms of assembly, homodimer.

The protein localises to the virion. Self-assembles to form a helical, filamentous nucleocapsid. The capsid proteins wrap around the DNA and maintain it in an A-form by non-specific desolvation and specific coordination of the DNA phosphate groups by positively charged residues. This certainly protects the viral DNA under conditions such as the extreme desiccation of its host. The polypeptide is Putative capsid protein (Sulfolobus islandicus rod-shaped virus 1 (SIRV-1)).